The sequence spans 344 residues: Aspartate-semialdehyde dehydrogenase (344 aa).

NADP(+)-binding positions include 10–13 and 38–39; these read TGQV and RS. Arg-101 is a phosphate binding site. The Acyl-thioester intermediate role is filled by Cys-131. A substrate-binding site is contributed by Gln-158. Position 161 to 162 (161 to 162) interacts with NADP(+); it reads SG. Lys-228 lines the phosphate pocket. Arg-250 contributes to the substrate binding site. Residue His-257 is the Proton acceptor of the active site. NADP(+) is bound at residue Asn-326.

This sequence belongs to the aspartate-semialdehyde dehydrogenase family. As to quaternary structure, homodimer.

The catalysed reaction is L-aspartate 4-semialdehyde + phosphate + NADP(+) = 4-phospho-L-aspartate + NADPH + H(+). It participates in amino-acid biosynthesis; L-lysine biosynthesis via DAP pathway; (S)-tetrahydrodipicolinate from L-aspartate: step 2/4. It functions in the pathway amino-acid biosynthesis; L-methionine biosynthesis via de novo pathway; L-homoserine from L-aspartate: step 2/3. Its pathway is amino-acid biosynthesis; L-threonine biosynthesis; L-threonine from L-aspartate: step 2/5. Functionally, catalyzes the NADPH-dependent formation of L-aspartate-semialdehyde (L-ASA) by the reductive dephosphorylation of L-aspartyl-4-phosphate. This is Aspartate-semialdehyde dehydrogenase from Corynebacterium glutamicum (strain ATCC 13032 / DSM 20300 / JCM 1318 / BCRC 11384 / CCUG 27702 / LMG 3730 / NBRC 12168 / NCIMB 10025 / NRRL B-2784 / 534).